Consider the following 529-residue polypeptide: tRNA pseudouridine synthase Pus10 (529 aa).

Residues cysteine 21 and cysteine 24 each coordinate Zn(2+). Positions 42 to 89 form a coiled coil; the sequence is KELLNELQKFLETEKDELILEVMNPPPKKIRLQELEDSIDNLSQNGEG. Residues serine 79 and serine 84 each carry the phosphoserine modification. Residues cysteine 109 and cysteine 112 each coordinate Zn(2+). Positions 304–317 are RNA binding forefinger loop; sequence TPWIIDGERKLESS. The Nucleophile role is filled by aspartate 344. An RNA binding thumb loop region spans residues 442–457; the sequence is QKTPLRVLHRRPLAVR.

It belongs to the pseudouridine synthase Pus10 family. Interacts with components of the microprocessor complex DROSHA and DGCR8. Post-translationally, proteolytically cleaved during TRAIL-induced cell death. Cleaved, in vitro, either by caspase-3 (CASP3) or caspase-8 (CASP8).

The protein resides in the nucleus. The protein localises to the cytoplasm. Its subcellular location is the mitochondrion. The catalysed reaction is uridine(55) in tRNA = pseudouridine(55) in tRNA. It carries out the reaction uridine(54) in tRNA = pseudouridine(54) in tRNA. Protein with different functions depending on its subcellular location: involved in miRNA processing in the nucleus and acts as a tRNA pseudouridylate synthase in the cytoplasm. In the cytoplasm, acts as a pseudouridylate synthase by catalyzing synthesis of pseudouridine(54) and pseudouridine(55) from uracil-54 and uracil-55, respectively, in the psi GC loop of a subset of tRNAs. tRNA pseudouridylate synthase activity is enhanced by the presence of 1-methyladenosine at position 53-61 of tRNAs. Does not show tRNA pseudouridylate synthase activity in the nucleus. In the nucleus, promotes primary microRNAs (pri-miRNAs) processing independently of its RNA pseudouridylate synthase activity. Binds pri-miRNAs. Modulator of TRAIL/TNFSF10-induced cell death via activation of procaspase-8 and BID cleavage. Required for the progression of the apoptotic signal through intrinsic mitochondrial cell death. This chain is tRNA pseudouridine synthase Pus10, found in Homo sapiens (Human).